Reading from the N-terminus, the 322-residue chain is Formimidoylglutamase (322 aa).

6 residues coordinate Mn(2+): histidine 127, aspartate 163, histidine 165, aspartate 167, aspartate 254, and aspartate 256.

It belongs to the arginase family. It depends on Mn(2+) as a cofactor.

It carries out the reaction N-formimidoyl-L-glutamate + H2O = formamide + L-glutamate. It participates in amino-acid degradation; L-histidine degradation into L-glutamate; L-glutamate from N-formimidoyl-L-glutamate (hydrolase route): step 1/1. Its function is as follows. Catalyzes the conversion of N-formimidoyl-L-glutamate to L-glutamate and formamide. The chain is Formimidoylglutamase from Paraburkholderia xenovorans (strain LB400).